A 357-amino-acid polypeptide reads, in one-letter code: tRNA/tmRNA (uracil-C(5))-methyltransferase (357 aa).

Positions 185, 212, 217, 233, and 291 each coordinate S-adenosyl-L-methionine. Residue Cys316 is the Nucleophile of the active site. Glu350 (proton acceptor) is an active-site residue.

Belongs to the class I-like SAM-binding methyltransferase superfamily. RNA M5U methyltransferase family. TrmA subfamily.

It carries out the reaction uridine(54) in tRNA + S-adenosyl-L-methionine = 5-methyluridine(54) in tRNA + S-adenosyl-L-homocysteine + H(+). The enzyme catalyses uridine(341) in tmRNA + S-adenosyl-L-methionine = 5-methyluridine(341) in tmRNA + S-adenosyl-L-homocysteine + H(+). Its function is as follows. Dual-specificity methyltransferase that catalyzes the formation of 5-methyluridine at position 54 (m5U54) in all tRNAs, and that of position 341 (m5U341) in tmRNA (transfer-mRNA). This Campylobacter hominis (strain ATCC BAA-381 / DSM 21671 / CCUG 45161 / LMG 19568 / NCTC 13146 / CH001A) protein is tRNA/tmRNA (uracil-C(5))-methyltransferase.